The chain runs to 1488 residues: Phenolphthiocerol/phthiocerol polyketide synthase subunit E (1488 aa).

A Ketosynthase family 3 (KS3) domain is found at 5 to 438 (ENAIAVVGMA…GTNAHVVLEE (434 aa)). Residues Cys184, His320, and His361 each act as for beta-ketoacyl synthase activity in the active site. The tract at residues 551-868 (VFLFPGQGAQ…GELWSAGVEV (318 aa)) is acyltransferase. The active-site For malonyltransferase activity is Ser641. The Carrier domain maps to 930-1004 (NGESQTEVTL…SLTAAVDASF (75 aa)). Ser965 is modified (O-(pantetheine 4'-phosphoryl)serine). NADP(+) is bound at residue 1286–1331 (EGVVAVELEGEGRSVLRPDVDLRRTVGWFTTYYPVPLACATGLGAL).

Requires NADP(+) as cofactor. Pantetheine 4'-phosphate is required as a cofactor.

It catalyses the reaction icosanoyl-[(phenol)carboxyphthiodiolenone synthase] + 2 (S)-methylmalonyl-CoA + 3 malonyl-CoA + 5 NADPH + 10 H(+) = C32-carboxyphthiodiolenone-[(phenol)carboxyphthiodiolenone synthase] + 5 CO2 + 5 NADP(+) + 5 CoA + 2 H2O. It carries out the reaction docosanoyl-[(phenol)carboxyphthiodiolenone synthase] + 2 (S)-methylmalonyl-CoA + 3 malonyl-CoA + 5 NADPH + 10 H(+) = C34-carboxyphthiodiolenone-[(phenol)carboxyphthiodiolenone synthase] + 5 CO2 + 5 NADP(+) + 5 CoA + 2 H2O. The enzyme catalyses 17-(4-hydroxyphenyl)heptadecanoyl-[(phenol)carboxyphthiodiolenone synthase] + 2 (S)-methylmalonyl-CoA + 3 malonyl-CoA + 5 NADPH + 10 H(+) = C35-(phenol)carboxyphthiodiolenone-[(phenol)carboxyphthiodiolenone synthase] + 5 CO2 + 5 NADP(+) + 5 CoA + 2 H2O. The catalysed reaction is 19-(4-hydroxyphenyl)nonadecanoyl-[(phenol)carboxyphthiodiolenone synthase] + 2 (S)-methylmalonyl-CoA + 3 malonyl-CoA + 5 NADPH + 10 H(+) = C37-(phenol)carboxyphthiodiolenone-[(phenol)carboxyphthiodiolenone synthase] + 5 CO2 + 5 NADP(+) + 5 CoA + 2 H2O. Its pathway is lipid metabolism; fatty acid biosynthesis. Functionally, part of the PpsABCDE complex involved in the biosynthesis of the lipid core common to phthiocerols and phenolphthiocerols by successive additions of malonyl-CoA or methylmalonyl-CoA extender units. PpsA can accept as substrate the activated forms of either icosanoyl (C20), docosanoyl (C22) or lignoceroyl (C24) groups from FadD26, or a (4-hydroxyphenyl)-C17 or (4-hydroxyphenyl)-C19 fatty acyl from FadD29. PpsA initiates the biosynthesis and extends its substrate using a malonyl-CoA extender unit. The PpsB and PpsC proteins add the second and third malonyl-CoA extender units. PpsD adds an (R)-methylmalonyl unit and PpsE adds a second (R)-methylmalonyl unit. The incorporation of the methylmalonyl units results in formation of two branched methyl groups in the elongated product. This Mycobacterium bovis (strain ATCC BAA-935 / AF2122/97) protein is Phenolphthiocerol/phthiocerol polyketide synthase subunit E (ppsE).